We begin with the raw amino-acid sequence, 462 residues long: L-seryl-tRNA(Sec) selenium transferase (462 aa).

An N6-(pyridoxal phosphate)lysine modification is found at Lys-294.

It belongs to the SelA family. In terms of assembly, homodecamer; pentamer of dimers. Binds only one seryl-tRNA(Sec) per dimer. Pyridoxal 5'-phosphate serves as cofactor.

It is found in the cytoplasm. The enzyme catalyses L-seryl-tRNA(Sec) + selenophosphate + H(+) = L-selenocysteinyl-tRNA(Sec) + phosphate. Its pathway is aminoacyl-tRNA biosynthesis; selenocysteinyl-tRNA(Sec) biosynthesis; selenocysteinyl-tRNA(Sec) from L-seryl-tRNA(Sec) (bacterial route): step 1/1. Its function is as follows. Converts seryl-tRNA(Sec) to selenocysteinyl-tRNA(Sec) required for selenoprotein biosynthesis. The polypeptide is L-seryl-tRNA(Sec) selenium transferase (Yersinia enterocolitica serotype O:8 / biotype 1B (strain NCTC 13174 / 8081)).